Here is a 223-residue protein sequence, read N- to C-terminus: RNA pyrophosphohydrolase (223 aa).

In terms of domain architecture, Nudix hydrolase spans 6–149; sequence GFRPNVGIIL…KRGVYEMALT (144 aa). Residues 38–59 carry the Nudix box motif; sequence GGIDRGESPEQAMFRELHEEVG. The interval 175–223 is disordered; the sequence is ERHMPDGGAPAGLDLPPGGSFDPHPDITSASDDPSPPPHNKAPFLPSQR. The span at 180 to 193 shows a compositional bias: low complexity; the sequence is DGGAPAGLDLPPGG.

It belongs to the Nudix hydrolase family. RppH subfamily. It depends on a divalent metal cation as a cofactor.

In terms of biological role, accelerates the degradation of transcripts by removing pyrophosphate from the 5'-end of triphosphorylated RNA, leading to a more labile monophosphorylated state that can stimulate subsequent ribonuclease cleavage. This is RNA pyrophosphohydrolase from Variovorax paradoxus (strain S110).